Consider the following 172-residue polypeptide: Adenine phosphoribosyltransferase (172 aa).

It belongs to the purine/pyrimidine phosphoribosyltransferase family. In terms of assembly, homodimer.

It is found in the cytoplasm. The enzyme catalyses AMP + diphosphate = 5-phospho-alpha-D-ribose 1-diphosphate + adenine. Its pathway is purine metabolism; AMP biosynthesis via salvage pathway; AMP from adenine: step 1/1. Catalyzes a salvage reaction resulting in the formation of AMP, that is energically less costly than de novo synthesis. This is Adenine phosphoribosyltransferase from Staphylococcus saprophyticus subsp. saprophyticus (strain ATCC 15305 / DSM 20229 / NCIMB 8711 / NCTC 7292 / S-41).